Here is a 293-residue protein sequence, read N- to C-terminus: MELAQSSLNETTEISAGEEAVFDAGAHPLFSRMPSSVSFNKLRKRLLRQVRQALDDFGMLKGSKRWLVGVSGGKDSYSLLALLMDLKWRGLLPVELVACNLDQGQPNFPKHVLPDYLQSIGVRHRIEYRDTYSIVKEKVPAGATYCSLCSRLRRGNLYRIAREEGCDALVLGHHREDILETFFMNFFHGGRLASMPAKLLNDEGDLMVLRPLAYAAEDDIAKFAAAMEFPIIPCDLCGSQDGLERNAMKAMLSDIERRMPGRKDTMLRALGHVNASHLLDPKLFDFQSLSPEP.

The short motif at serine 71 to serine 76 is the PP-loop motif element. 3 residues coordinate [4Fe-4S] cluster: cysteine 146, cysteine 149, and cysteine 237.

The protein belongs to the TtcA family. In terms of assembly, homodimer. Requires Mg(2+) as cofactor. [4Fe-4S] cluster is required as a cofactor.

The protein resides in the cytoplasm. It catalyses the reaction cytidine(32) in tRNA + S-sulfanyl-L-cysteinyl-[cysteine desulfurase] + AH2 + ATP = 2-thiocytidine(32) in tRNA + L-cysteinyl-[cysteine desulfurase] + A + AMP + diphosphate + H(+). It participates in tRNA modification. Functionally, catalyzes the ATP-dependent 2-thiolation of cytidine in position 32 of tRNA, to form 2-thiocytidine (s(2)C32). The sulfur atoms are provided by the cysteine/cysteine desulfurase (IscS) system. The chain is tRNA-cytidine(32) 2-sulfurtransferase from Sinorhizobium medicae (strain WSM419) (Ensifer medicae).